A 742-amino-acid polypeptide reads, in one-letter code: Photosystem I P700 chlorophyll a apoprotein A2 2 (742 aa).

The next 8 helical transmembrane spans lie at 46-69, 135-158, 175-199, 273-291, 334-357, 373-399, 421-443, and 524-542; these read IFAT…FHVA, LYQG…LHLQ, LNHH…HVAI, MAHH…GHMY, LHFQ…QHMY, AALY…IFWV, AIIS…LYVH, and FLVH…LICV. [4Fe-4S] cluster-binding residues include Cys566 and Cys575. 2 consecutive transmembrane segments (helical) span residues 583–604 and 651–673; these read SFYL…YWHW and LSVW…MFLI. The chlorophyll a site is built by His662, Met670, and Tyr678. Residue Trp679 coordinates phylloquinone. The chain crosses the membrane as a helical span at residues 715–735; sequence LVGLAHFTVGYILTYAAFLIA.

The protein belongs to the PsaA/PsaB family. As to quaternary structure, the PsaA/B heterodimer binds the P700 chlorophyll special pair and subsequent electron acceptors. PSI consists of a core antenna complex that captures photons, and an electron transfer chain that converts photonic excitation into a charge separation. The cyanobacterial PSI reaction center is composed of one copy each of PsaA,B,C,D,E,F,I,J,K,L,M and X, and forms trimeric complexes. PSI electron transfer chain: 5 chlorophyll a, 1 chlorophyll a', 2 phylloquinones and 3 4Fe-4S clusters. PSI core antenna: 90 chlorophyll a, 22 carotenoids, 3 phospholipids and 1 galactolipid. P700 is a chlorophyll a/chlorophyll a' dimer, A0 is one or more chlorophyll a, A1 is one or both phylloquinones and FX is a shared 4Fe-4S iron-sulfur center. serves as cofactor.

It localises to the cellular thylakoid membrane. The catalysed reaction is reduced [plastocyanin] + hnu + oxidized [2Fe-2S]-[ferredoxin] = oxidized [plastocyanin] + reduced [2Fe-2S]-[ferredoxin]. Functionally, psaA and PsaB bind P700, the primary electron donor of photosystem I (PSI), as well as the electron acceptors A0, A1 and FX. PSI is a plastocyanin/cytochrome c6-ferredoxin oxidoreductase, converting photonic excitation into a charge separation, which transfers an electron from the donor P700 chlorophyll pair to the spectroscopically characterized acceptors A0, A1, FX, FA and FB in turn. Oxidized P700 is reduced on the lumenal side of the thylakoid membrane by plastocyanin or cytochrome c6. The chain is Photosystem I P700 chlorophyll a apoprotein A2 2 from Trichormus variabilis (strain ATCC 29413 / PCC 7937) (Anabaena variabilis).